Reading from the N-terminus, the 335-residue chain is Ubiquinone biosynthesis protein COQ4, mitochondrial (335 aa).

Residues 1-10 constitute a mitochondrion transit peptide; that stretch reads MLRLSLLRST. 4 residues coordinate Zn(2+): His-210, Asp-211, His-214, and Glu-226.

This sequence belongs to the COQ4 family. As to quaternary structure, component of a multi-subunit COQ enzyme complex, composed of at least COQ3, COQ4, COQ5, COQ6, COQ7 and COQ9. Interacts with COQ3. Zn(2+) serves as cofactor.

Its subcellular location is the mitochondrion inner membrane. It carries out the reaction 4-hydroxy-3-methoxy-5-(all-trans-hexaprenyl)benzoate + H(+) = 2-methoxy-6-(all-trans-hexaprenyl)phenol + CO2. It functions in the pathway cofactor biosynthesis; ubiquinone biosynthesis. Lyase that catalyzes the C1-decarboxylation of 4-hydroxy-3-methoxy-5-(all-trans-hexaprenyl)benzoic acid into 2-methoxy-6-(all-trans-hexaprenyl)phenol during ubiquinone biosynthesis. May play a role in organizing a multi-subunit COQ enzyme complex required for coenzyme Q biosynthesis. Required for steady-state levels of COQ3, COQ4, COQ6, COQ7 and COQ9 polypeptides. In Saccharomyces cerevisiae (strain ATCC 204508 / S288c) (Baker's yeast), this protein is Ubiquinone biosynthesis protein COQ4, mitochondrial.